Reading from the N-terminus, the 275-residue chain is Polyamine aminopropyltransferase (275 aa).

The PABS domain occupies glutamate 2–lysine 235. Glutamine 31 lines the S-methyl-5'-thioadenosine pocket. 2 residues coordinate spermidine: histidine 62 and aspartate 86. S-methyl-5'-thioadenosine is bound by residues glutamate 106 and aspartate 137 to glycine 138. Aspartate 155 acts as the Proton acceptor in catalysis. Aspartate 155–glutamate 158 is a spermidine binding site. Proline 162 provides a ligand contact to S-methyl-5'-thioadenosine.

This sequence belongs to the spermidine/spermine synthase family. In terms of assembly, homodimer or homotetramer.

Its subcellular location is the cytoplasm. It carries out the reaction S-adenosyl 3-(methylsulfanyl)propylamine + putrescine = S-methyl-5'-thioadenosine + spermidine + H(+). The protein operates within amine and polyamine biosynthesis; spermidine biosynthesis; spermidine from putrescine: step 1/1. Catalyzes the irreversible transfer of a propylamine group from the amino donor S-adenosylmethioninamine (decarboxy-AdoMet) to putrescine (1,4-diaminobutane) to yield spermidine. This is Polyamine aminopropyltransferase from Bacillus cereus (strain ATCC 10987 / NRS 248).